The chain runs to 350 residues: Protein O-mannose kinase (350 aa).

Methionine 1 is subject to N-acetylmethionine. Residues 1–20 (MEKQPQNKRRGLAPREVPPA) are Cytoplasmic-facing. A helical; Signal-anchor for type II membrane protein membrane pass occupies residues 21–43 (VGLLLIMALMNTLLYLCLDHFFI). At 44 to 350 (APRQSIVDPR…AVMSQAREML (307 aa)) the chain is on the lumenal side. One can recognise a Protein kinase domain in the interval 81-350 (VRQLKRVGEG…AVMSQAREML (270 aa)). Asparagine 165, asparagine 220, and asparagine 235 each carry an N-linked (GlcNAc...) asparagine glycan.

It belongs to the protein kinase superfamily. Ser/Thr protein kinase family. STKL subfamily.

The protein resides in the endoplasmic reticulum membrane. It carries out the reaction 3-O-[beta-D-GalNAc-(1-&gt;3)-beta-D-GlcNAc-(1-&gt;4)-alpha-D-Man]-L-Thr-[protein] + ATP = 3-O-[beta-D-GalNAc-(1-&gt;3)-beta-D-GlcNAc-(1-&gt;4)-(O-6-P-alpha-D-Man)]-Thr-[protein] + ADP + H(+). Its function is as follows. Protein O-mannose kinase that specifically mediates phosphorylation at the 6-position of an O-mannose of the trisaccharide (N-acetylgalactosamine (GalNAc)-beta-1,3-N-acetylglucosamine (GlcNAc)-beta-1,4-mannose) to generate phosphorylated O-mannosyl trisaccharide (N-acetylgalactosamine-beta-1,3-N-acetylglucosamine-beta-1,4-(phosphate-6-)mannose). Phosphorylated O-mannosyl trisaccharide is a carbohydrate structure present in alpha-dystroglycan (DAG1), which is required for binding laminin G-like domain-containing extracellular proteins with high affinity. Only shows kinase activity when the GalNAc-beta-3-GlcNAc-beta-terminus is linked to the 4-position of O-mannose, suggesting that this disaccharide serves as the substrate recognition motif. The polypeptide is Protein O-mannose kinase (POMK) (Macaca fascicularis (Crab-eating macaque)).